A 351-amino-acid polypeptide reads, in one-letter code: Methylthioribose-1-phosphate isomerase (351 aa).

Substrate is bound by residues 53–55 (RGA), Arg-96, and Gln-205. The active-site Proton donor is the Asp-246. Residue 256–257 (NK) coordinates substrate.

Belongs to the eIF-2B alpha/beta/delta subunits family. MtnA subfamily.

The enzyme catalyses 5-(methylsulfanyl)-alpha-D-ribose 1-phosphate = 5-(methylsulfanyl)-D-ribulose 1-phosphate. It participates in amino-acid biosynthesis; L-methionine biosynthesis via salvage pathway; L-methionine from S-methyl-5-thio-alpha-D-ribose 1-phosphate: step 1/6. Functionally, catalyzes the interconversion of methylthioribose-1-phosphate (MTR-1-P) into methylthioribulose-1-phosphate (MTRu-1-P). The polypeptide is Methylthioribose-1-phosphate isomerase (Synechocystis sp. (strain ATCC 27184 / PCC 6803 / Kazusa)).